A 439-amino-acid polypeptide reads, in one-letter code: 5-methylthioadenosine/S-adenosylhomocysteine deaminase (439 aa).

Zn(2+) is bound by residues H70 and H72. E99 and H192 together coordinate substrate. H219 is a Zn(2+) binding site. E222 and D307 together coordinate substrate. D307 contacts Zn(2+).

Belongs to the metallo-dependent hydrolases superfamily. MTA/SAH deaminase family. Zn(2+) is required as a cofactor.

The enzyme catalyses S-adenosyl-L-homocysteine + H2O + H(+) = S-inosyl-L-homocysteine + NH4(+). It carries out the reaction S-methyl-5'-thioadenosine + H2O + H(+) = S-methyl-5'-thioinosine + NH4(+). Catalyzes the deamination of 5-methylthioadenosine and S-adenosyl-L-homocysteine into 5-methylthioinosine and S-inosyl-L-homocysteine, respectively. Is also able to deaminate adenosine. This is 5-methylthioadenosine/S-adenosylhomocysteine deaminase from Thermodesulfovibrio yellowstonii (strain ATCC 51303 / DSM 11347 / YP87).